We begin with the raw amino-acid sequence, 609 residues long: Zinc metalloproteinase-disintegrin-like VMP-III (609 aa).

A signal peptide spans 1 to 20 (MIQVLLVTICLAAFPYQGSS). Positions 21–189 (IILESGNVND…KKASQLVVTA (169 aa)) are excised as a propeptide. Residues 198–393 (RFVELFLVVD…HNPECILNEP (196 aa)) enclose the Peptidase M12B domain. E201 and D285 together coordinate Ca(2+). Cystine bridges form between C308-C388, C348-C372, and C350-C355. H333 is a binding site for Zn(2+). E334 is a catalytic residue. H337 and H343 together coordinate Zn(2+). N371 carries an N-linked (GlcNAc...) asparagine glycan. Residues C388, N391, V403, N406, L408, E410, E413, and D416 each coordinate Ca(2+). Residues 401-487 (PPVCGNELLE…ECPADVFHKN (87 aa)) enclose the Disintegrin domain. Cystine bridges form between C404-C433, C415-C428, C417-C423, C427-C450, C441-C447, C446-C472, C459-C479, C466-C498, C491-C503, C510-C560, C525-C571, C538-C548, C555-C597, and C591-C602. Positions 465 to 467 (ECD) match the D/ECD-tripeptide motif. Ca(2+)-binding residues include D467, P468, E470, D482, and V483.

Belongs to the venom metalloproteinase (M12B) family. P-III subfamily. P-IIIa sub-subfamily. As to quaternary structure, monomer. The cofactor is Zn(2+). In terms of tissue distribution, expressed by the venom gland.

It localises to the secreted. Functionally, snake venom metalloproteinase that impairs hemostasis in the envenomed animal. This is Zinc metalloproteinase-disintegrin-like VMP-III from Crotalus viridis viridis (Prairie rattlesnake).